The sequence spans 459 residues: U-box domain-containing protein 75 (459 aa).

Residues 64–138 (AVPAVFICPI…AAWFSRRYTR (75 aa)) enclose the U-box domain. 2 ARM repeats span residues 188-229 (QSVT…GVPL) and 231-270 (ADAK…ILME).

Interacts with GPA1. Expressed highly in panicles at flowering time, at moderate levels in vegetative shoot apices, leaf sheaths, leaf blades, and elongating internodes, and at low levels in roots.

The protein localises to the cell membrane. It catalyses the reaction S-ubiquitinyl-[E2 ubiquitin-conjugating enzyme]-L-cysteine + [acceptor protein]-L-lysine = [E2 ubiquitin-conjugating enzyme]-L-cysteine + N(6)-ubiquitinyl-[acceptor protein]-L-lysine.. It participates in protein modification; protein ubiquitination. Its function is as follows. E3 ubiquitin ligase that may function as positive regulator of brassinosteroid (BR) signaling. Possesses E3 ubiquitin ligase in vitro. Acts together with the heterotrimeric G alpha subunit GPA1 at the plasma membrane to mediate a BR signaling pathway that affects plant growth and development. Does not seem to be involved in gibberellin or cytokinin responses. This chain is U-box domain-containing protein 75, found in Oryza sativa subsp. japonica (Rice).